A 242-amino-acid polypeptide reads, in one-letter code: tRNA (guanine-N(1)-)-methyltransferase (242 aa).

S-adenosyl-L-methionine contacts are provided by residues Gly108 and 127–132 (IGDYVL).

The protein belongs to the RNA methyltransferase TrmD family. As to quaternary structure, homodimer.

The protein localises to the cytoplasm. The enzyme catalyses guanosine(37) in tRNA + S-adenosyl-L-methionine = N(1)-methylguanosine(37) in tRNA + S-adenosyl-L-homocysteine + H(+). Its function is as follows. Specifically methylates guanosine-37 in various tRNAs. The polypeptide is tRNA (guanine-N(1)-)-methyltransferase (Lactobacillus acidophilus (strain ATCC 700396 / NCK56 / N2 / NCFM)).